The sequence spans 222 residues: Gamma-glutamyl cyclotransferase gliK (222 aa).

The next 2 helical transmembrane spans lie at 154 to 174 (GWWF…AAII) and 187 to 207 (GHVP…MWAQ).

The protein belongs to the class-I pyridoxal-phosphate-dependent aminotransferase family.

It is found in the membrane. It carries out the reaction an alpha-(gamma-L-glutamyl)-L-amino acid = 5-oxo-L-proline + an L-alpha-amino acid. It functions in the pathway secondary metabolite biosynthesis. Gamma-glutamyl cyclotransferase; part of the gene cluster that mediates the biosynthesis of an unusual class of epipolythiodioxopiperazines (ETPs) lacking the reactive thiol group important for toxicity. Firstly, L-tyrosine is prenylated by tcpD, before undergoing condensation with L-glycine in a reaction catalyzed by the NRPS tcpP leading to the diketopiperazine (DKP) backbone. Afterwards the alpha-carbon of tyrosine is oxidized by the cytochrome P450 tcpC to form a hydroxyl group. However, in contrast other ETP biosynthesis pathways studied so far, tcpC is not able to bishydroxylate the DKP at both alpha-carbon positions, but hydroxylates the alpha-carbon of the tyrosine part and the nitrogen of the glycine part. The next steps involve an alpha,beta-elimination reaction catalyzed by tcpI, a methylation by the methyltransferase tcpN the action of the four enzyme cascade tcpG/K/J/I. Due to a dysfunctional cytochrome P450 monooxygenase tcpC, the pathway leads to the biosynthesis of probable non-toxic metabolites lacking the reactive thiol group. This is Gamma-glutamyl cyclotransferase gliK from Claviceps purpurea (strain 20.1) (Ergot fungus).